We begin with the raw amino-acid sequence, 134 residues long: Histone-like protein Rv3852 (134 aa).

A compositionally biased stretch (basic and acidic residues) spans Met1–Ser10. The interval Met1 to Gln68 is disordered. Positions Leu23 to Pro48 are enriched in basic residues. Residues Pro111–Ile128 traverse the membrane as a helical segment.

As to quaternary structure, homodimer in solution. Is probably able to self-associate in higher oligomers along the DNA molecules. Interacts with the N-terminal region of Wag31.

It localises to the cell inner membrane. Can interact directly in vitro with the compound agrimophol, a phloroglucinol from the A.pilosa plant, whose extracts have been used in traditional Chinese medicine to treat pulmonary infections. Interaction with agrimophol leads to disruption of Rv3852's DNA binding function. Functionally, binds DNA in vitro. It has been proposed that Rv3852 plays a role in nucleoid organization and may function as an anchorage to tether the DNA to the membrane. However, it was later shown that it has no influence on nucleoid shape or compaction. It plays no role in virulence and only a minor role in the control of transcription, and does not appear to function as a typical nucleoid-associated protein. Interacts with Wag31, an important cell shape and cell wall integrity determinant, and facilitates the localization of Wag31 to the cell poles and the cell wall, thus enabling nascent peptidoglycan synthesis. In Mycobacterium tuberculosis (strain ATCC 25618 / H37Rv), this protein is Histone-like protein Rv3852.